A 423-amino-acid chain; its full sequence is Keratin, type I cytoskeletal 18 (423 aa).

Residue S2 is modified to N-acetylserine. Positions S2–T71 are head. Residues S7, S11, S16, and S19 each carry the phosphoserine modification. 2 positions are modified to phosphoserine; alternate: S31 and S32. Residues S31 and S32 are each glycosylated (O-linked (GlcNAc) serine; alternate). S35 carries the post-translational modification Phosphoserine. Y37 is subject to Phosphotyrosine. A Phosphoserine modification is found at S43. R46 bears the Omega-N-methylarginine mark. S50 carries the post-translational modification Phosphoserine; alternate. S50 carries O-linked (GlcNAc) serine; alternate glycosylation. A Phosphoserine; by MAPKAPK2 and MAPKAPK3 modification is found at S52. Phosphoserine occurs at positions 57 and 60. The tract at residues G62–L366 is necessary for interaction with PNN. The tract at residues I69 to H121 is interaction with TRADD. Residues E72–H107 form a coil 1A region. Residues E72 to S384 form the IF rod domain. Residue K73 forms a Glycyl lysine isopeptide (Lys-Gly) (interchain with G-Cter in SUMO2) linkage. S85 and S92 each carry phosphoserine. Residues L108–I125 form a linker 1 region. K124 is modified (N6-acetyllysine). The coil 1B stretch occupies residues I126 to L217. Phosphoserine is present on residues S137 and S170. The interval E218 to I241 is linker 12. The segment at Q236–S384 is interaction with DNAJB6. K240 participates in a covalent cross-link: Glycyl lysine isopeptide (Lys-Gly) (interchain with G-Cter in SUMO2). The coil 2 stretch occupies residues M242–G380. A Phosphothreonine modification is found at T295. Phosphoserine is present on S316. Glycyl lysine isopeptide (Lys-Gly) (interchain with G-Cter in SUMO2) cross-links involve residues K363 and K365. The tract at residues E381 to H423 is tail. A phosphoserine mark is found at S384, S391, S392, and S394. Position 397 is a phosphothreonine (T397).

This sequence belongs to the intermediate filament family. Heterotetramer of two type I and two type II keratins. KRT18 associates with KRT8. Interacts with PLEC isoform 1C, when in a heterodimer with KRT8. Interacts with PNN and mutated CFTR. Interacts with YWHAE, YWHAH and YWHAZ only when phosphorylated. Interacts with the thrombin-antithrombin complex. Interacts with DNAJB6, TCHP and TRADD. Interacts with FAM83H. Interacts with EPPK1. Interacts with PKP1 and PKP2. Post-translationally, phosphorylation increases by IL-6. Proteolytically cleaved by caspases during epithelial cell apoptosis. Cleavage occurs at Asp-231 by either caspase-3, caspas-6 or caspase-7. In terms of processing, O-GlcNAcylation increases solubility, and decreases stability by inducing proteasomal degradation. Expressed in endoderm, intestinal epithelial cells and in most extraembryonic tissues.

The protein resides in the nucleus matrix. It is found in the cytoplasm. The protein localises to the perinuclear region. Its subcellular location is the nucleus. It localises to the nucleolus. Functionally, when phosphorylated, plays a role in filament reorganization. Involved in the delivery of mutated CFTR to the plasma membrane. Involved in the uptake of thrombin-antithrombin complexes by hepatic cells. Together with KRT8, is involved in interleukin-6 (IL-6)-mediated barrier protection. In Mus musculus (Mouse), this protein is Keratin, type I cytoskeletal 18 (Krt18).